A 200-amino-acid chain; its full sequence is Small ribosomal subunit protein mS26 (200 aa).

Residues 1–27 (MLRALNRLAARPGGQPPTLLLLPVRGR) constitute a mitochondrion transit peptide. Lys-159 is subject to N6-acetyllysine.

Belongs to the mitochondrion-specific ribosomal protein mS26 family. Component of the mitochondrial ribosome small subunit (28S) which comprises a 12S rRNA and about 30 distinct proteins.

The protein resides in the mitochondrion. This Rattus norvegicus (Rat) protein is Small ribosomal subunit protein mS26 (Mrps26).